A 332-amino-acid chain; its full sequence is Abl interactor homolog (332 aa).

Positions 73 to 104 (HITSLLQLQTNEMEKLNIEIQTLTQRVRMIHD) form a coiled coil. The interval 152–332 (SDINQNGVPP…NDFPPPPPPM (181 aa)) is disordered. The segment covering 164–206 (NHSNSSANLTSSSGHLAASSTSNSSTPSYQSPSYSSQPTISSG) has biased composition (low complexity). A compositionally biased stretch (pro residues) spans 221 to 247 (APPPPSLSVPAAPPPPVMNVPPPPPTS). A compositionally biased stretch (polar residues) spans 248–257 (QRPSSVNNNA). A compositionally biased stretch (pro residues) spans 277–314 (LPPPPSFGLPPPPTLGDDFPPPPPPPVGSYDFPPPPAR).

It belongs to the ABI family. As to quaternary structure, part of a Scar/WAVE complex containing brk1, scrA, abiA, pirA and napA. Interacts with scrA.

Functionally, involved in regulation of actin and microtubule organization. Required for proper cytokinesis. This chain is Abl interactor homolog (abiA), found in Dictyostelium discoideum (Social amoeba).